A 453-amino-acid polypeptide reads, in one-letter code: Probable exopolygalacturonase B (453 aa).

The first 16 residues, 1–16 (MKFLALAALFASTVSS), serve as a signal peptide directing secretion. N185 and N225 each carry an N-linked (GlcNAc...) asparagine glycan. The active-site Proton donor is D255. C257 and C274 are oxidised to a cystine. N-linked (GlcNAc...) asparagine glycosylation is found at N263 and N275. H278 is an active-site residue. PbH1 repeat units lie at residues 295–316 (IENV…RLKA) and 327–348 (INNV…VLDQ). N302, N329, N354, and N366 each carry an N-linked (GlcNAc...) asparagine glycan. One copy of the PbH1 3 repeat lies at 362-405 (PSRVNFTNIVFENIYGTSSGKHGKVVADLTCSPNAVCSGIRLKN). A disulfide bridge connects residues C392 and C398. A glycan (N-linked (GlcNAc...) asparagine) is linked at N436.

Belongs to the glycosyl hydrolase 28 family.

The protein resides in the secreted. It catalyses the reaction [(1-&gt;4)-alpha-D-galacturonosyl](n) + H2O = alpha-D-galacturonate + [(1-&gt;4)-alpha-D-galacturonosyl](n-1). In terms of biological role, specific in hydrolyzing the terminal glycosidic bond of polygalacturonic acid and oligogalacturonates. This Neosartorya fischeri (strain ATCC 1020 / DSM 3700 / CBS 544.65 / FGSC A1164 / JCM 1740 / NRRL 181 / WB 181) (Aspergillus fischerianus) protein is Probable exopolygalacturonase B (pgxB).